Consider the following 1008-residue polypeptide: MAAAEAPSLREQPEMEDANSEKSVNEENGEVSEDQSQNKHSRHKKKKHKHRSKHKKHKHSSEEDKDRKHKHKHKHKKHKRKEVADASDKEGMSPAKRTKLDDLALLEDLEKQRALIKAELDNELMEGKVQSGMGLILQGYESGSEEEGEIHEKARNGNRSSTRSSSTKGKLELVDNKNSTKKRSKSRSKERTRHRSDKKKSKGGVEIVKEKATRSKSKERKKSKSPSKRSKSQDEARKSKSPTLRRRSQEKVGKARSPVDDKAKVEDKSKAKDRKKSPVINESRSRDRGKKSRSPVDLRGKSKDRRSRSKERKSKRPEADKEKKPVKSPSKDASSGKENRSPSRRPGRSPKRRSLSPKQRDKSRRSRSPLVNDRRSKQSKSPSRTLSPGRRAKSRSLERKRREPERRRLSSPRTRPRDDILSRRERSKDASPISRWSPARRRASRSPVRRRSRSPLRRSRSPRRRSRSPRRRDRGRRSRSRLRRRSRSRGGRRRRSRSKVKEDKFKGSLSEGMKVEQESSSDDNLEDFDVEEEDEEALIEQRRIQRQAIVQKYKYLADDSNLSVPSEPSSPQSSTRSRSPSPDDILERVAADVKEYERENVDTFEASVKAKHNLMAVEQNNGSSQKKLLAPDMFTESDDMFAAYFDSARLRAAGIGKDFKENPNLRDNWTDAEGYYRVNIGEVLDKRYNVYGYTGQGVFSNVVRARDNARANQEVAVKIIRNNELMQKTGLKELEFLKKLNDADPDDKFHCLRLFRHFYHKQHLCLVFEPLSMNLREVLKKYGKDVGLHIKAVRSYSQQLFLALKLLKRCNILHADIKPDNILVNESKTILKLCDFGSASHVADNDITPYLVSRFYRAPEIIIGKSYDYGIDMWSVGCTLYELYTGKILFPGKTNNHMLKLAMDLKGKMPNKMIRKGVFKDQHFDQNLNFMYIEVDKVTEREKVTVMSTINPTKDLLADLIGCQRLPEDQRKKVHQLKDLLDQILMLDPAKRISINQALQHAFIQEKI.

The segment at 1 to 103 (MAAAEAPSLR…PAKRTKLDDL (103 aa)) is disordered. A2 carries the N-acetylalanine modification. Phosphoserine occurs at positions 8, 20, 23, and 32. 2 stretches are compositionally biased toward basic residues: residues 39–59 (KHSR…KHKH) and 67–81 (RKHK…HKRK). Basic and acidic residues predominate over residues 82–91 (EVADASDKEG). Phosphoserine occurs at positions 87 and 93. Residue K99 is modified to N6-acetyllysine; alternate. A Glycyl lysine isopeptide (Lys-Gly) (interchain with G-Cter in SUMO2); alternate cross-link involves residue K99. Residue K111 forms a Glycyl lysine isopeptide (Lys-Gly) (interchain with G-Cter in SUMO2) linkage. K117 is covalently cross-linked (Glycyl lysine isopeptide (Lys-Gly) (interchain with G-Cter in SUMO2); alternate). K117 participates in a covalent cross-link: Glycyl lysine isopeptide (Lys-Gly) (interchain with G-Cter in SUMO1); alternate. S131 bears the Phosphoserine mark. Y140 bears the Phosphotyrosine mark. 2 disordered regions span residues 140 to 536 (YESG…EDEE) and 560 to 584 (SNLS…SPDD). 3 positions are modified to phosphoserine: S142, S144, and S166. Over residues 157 to 168 (GNRSSTRSSSTK) the composition is skewed to low complexity. Residues K170 and K177 each participate in a glycyl lysine isopeptide (Lys-Gly) (interchain with G-Cter in SUMO2) cross-link. Composition is skewed to basic residues over residues 179 to 202 (STKK…KKSK) and 214 to 230 (RSKS…SKRS). Residues S239, S241, S257, S277, S283, S292, and S294 each carry the phosphoserine modification. Basic and acidic residues predominate over residues 247–270 (RSQEKVGKARSPVDDKAKVEDKSK). Residues 302-315 (SKDRRSRSKERKSK) show a composition bias toward basic residues. The span at 316–325 (RPEADKEKKP) shows a compositional bias: basic and acidic residues. 5 positions are modified to phosphoserine: S328, S354, S356, S366, and S368. The span at 342–367 (PSRRPGRSPKRRSLSPKQRDKSRRSR) shows a compositional bias: basic residues. T385 carries the phosphothreonine modification. S387 bears the Phosphoserine mark. 2 stretches are compositionally biased toward basic and acidic residues: residues 395–408 (RSLE…ERRR) and 415–429 (RPRD…RSKD). Phosphoserine is present on residues S427, S431, and S437. Residues 438–498 (PARRRASRSP…RGGRRRRSRS (61 aa)) are compositionally biased toward basic residues. S519, S520, S521, S566, S570, S577, S579, and S581 each carry phosphoserine. The span at 519–536 (SSSDDNLEDFDVEEEDEE) shows a compositional bias: acidic residues. The segment covering 563 to 582 (SVPSEPSSPQSSTRSRSPSP) has biased composition (low complexity). Glycyl lysine isopeptide (Lys-Gly) (interchain with G-Cter in SUMO2) cross-links involve residues K594 and K660. Residues 688 to 1004 (YNVYGYTGQG…INQALQHAFI (317 aa)) form the Protein kinase domain. ATP is bound by residues 694 to 702 (TGQGVFSNV) and K718. N6-acetyllysine is present on K718. The active-site Proton acceptor is D816. The residue at position 850 (Y850) is a Phosphotyrosine. S853 carries the post-translational modification Phosphoserine.

The protein belongs to the protein kinase superfamily. CMGC Ser/Thr protein kinase family. Interacts with CLK1 C-terminus. Associates with the U5 snRNP and NCOR1 deacetylase complexes. Identified in the spliceosome C complex. Phosphorylated by CLK1. Autophosphorylated; phosphorylation inhibits interaction with its targets, such as PRPF6 or SMARCA4.

It is found in the nucleus. The protein resides in the chromosome. Its subcellular location is the centromere. The protein localises to the kinetochore. It catalyses the reaction L-seryl-[protein] + ATP = O-phospho-L-seryl-[protein] + ADP + H(+). The catalysed reaction is L-threonyl-[protein] + ATP = O-phospho-L-threonyl-[protein] + ADP + H(+). Its function is as follows. Serine/threonine kinase involved in spliceosomal assembly as well as mitosis and signaling regulation. Connects chromatin mediated regulation of transcription and pre-mRNA splicing. During spliceosomal assembly, interacts with and phosphorylates PRPF6 and PRPF31, components of the U4/U6-U5 tri-small nuclear ribonucleoprotein (snRNP), to facilitate the formation of the spliceosome B complex. Plays a role in regulating transcription and the spindle assembly checkpoint (SAC). Associates with U5 snRNP and NCOR1 deacetylase complexes which may allow a coordination of pre-mRNA splicing with chromatin remodeling events involved in transcriptional regulation. Associates and probably phosphorylates SMARCA4 and NCOR1. Phosphorylates SRSF1. Associates with kinetochores during mitosis and is necessary for recruitment and maintenance of the checkpoint proteins such as MAD1L1 and MAD12L1 at the kinetochores. Phosphorylates and regulates the activity of the transcription factors such as ELK1 and KLF13. Phosphorylates nuclear YAP1 and WWTR1/TAZ which induces nuclear exclusion and regulates Hippo signaling pathway, involved in tissue growth control. The protein is Serine/threonine-protein kinase PRP4 homolog (PRP4K) of Bos taurus (Bovine).